The following is a 38-amino-acid chain: Large ribosomal subunit protein bL36c (38 aa).

This sequence belongs to the bacterial ribosomal protein bL36 family.

The protein localises to the plastid. The protein resides in the chloroplast. This Mesostigma viride (Green alga) protein is Large ribosomal subunit protein bL36c (rpl36).